Reading from the N-terminus, the 68-residue chain is MHFLKKSIFLVLFLGLVSLSICEKEKREDQNEEEVDENEEESEEKRGLMSVLGHAVGNVLGGLFKPKS.

The signal sequence occupies residues 1-22 (MHFLKKSIFLVLFLGLVSLSIC). The propeptide occupies 23 to 46 (EKEKREDQNEEEVDENEEESEEKR). Residues 26–47 (KREDQNEEEVDENEEESEEKRG) are disordered. The segment covering 30-42 (QNEEEVDENEEES) has biased composition (acidic residues).

Belongs to the frog skin active peptide (FSAP) family. Frenatin subfamily. Expressed by the granular skin glands.

Its subcellular location is the secreted. Functionally, antimicrobial peptide with activity against both Gram-positive and Gram-negative bacteria. Antibacterial activities have been tested against Bacillus cereus (MIC=12.5 ug/ml), Escherichia coli (MIC=50 ug/ml), Leuconostoc mesenteroides (MIC=25 ug/ml), Micrococcus luteus (MIC=1.5 ug/ml), Pastewella haemolytica (MIC=0.8 ug/ml), Staphylococcus aureus (MIC&lt;l00 ug/ml), Streptococcus faecalis (MIC&lt;150 ug/ml) and Streptococcus uberis (MIC=50 ug/ml). Strongly inhibits the formation of NO by neuronal nitric oxide synthase (nNOS) at micromolar concentrations. Acts by a non-competitive mechanism, probably by binding to calcium/calmodulin and as a consequence blocking calmodulin attachment to nNOS. This Nyctimystes infrafrenatus (White-lipped tree frog) protein is Frenatin-3.